The following is a 356-amino-acid chain: Holliday junction branch migration complex subunit RuvB (356 aa).

Positions 1 to 14 (MAIVSSITNHSSLP) are enriched in polar residues. Residues 1-20 (MAIVSSITNHSSLPNDKGEE) are disordered. The tract at residues 13–201 (LPNDKGEERL…FGITQRLDFY (189 aa)) is large ATPase domain (RuvB-L). ATP-binding residues include Leu40, Arg41, Gly82, Lys85, Thr86, Thr87, Arg191, Tyr201, and Arg238. Thr86 contributes to the Mg(2+) binding site. A small ATPAse domain (RuvB-S) region spans residues 202–273 (NYLDLENIIK…VVNDALDLHR (72 aa)). The head domain (RuvB-H) stretch occupies residues 276 to 356 (QRGLDATDRS…LLTSPNNIDK (81 aa)). The DNA site is built by Arg331 and Arg336.

The protein belongs to the RuvB family. As to quaternary structure, homohexamer. Forms an RuvA(8)-RuvB(12)-Holliday junction (HJ) complex. HJ DNA is sandwiched between 2 RuvA tetramers; dsDNA enters through RuvA and exits via RuvB. An RuvB hexamer assembles on each DNA strand where it exits the tetramer. Each RuvB hexamer is contacted by two RuvA subunits (via domain III) on 2 adjacent RuvB subunits; this complex drives branch migration. In the full resolvosome a probable DNA-RuvA(4)-RuvB(12)-RuvC(2) complex forms which resolves the HJ.

It localises to the cytoplasm. The enzyme catalyses ATP + H2O = ADP + phosphate + H(+). In terms of biological role, the RuvA-RuvB-RuvC complex processes Holliday junction (HJ) DNA during genetic recombination and DNA repair, while the RuvA-RuvB complex plays an important role in the rescue of blocked DNA replication forks via replication fork reversal (RFR). RuvA specifically binds to HJ cruciform DNA, conferring on it an open structure. The RuvB hexamer acts as an ATP-dependent pump, pulling dsDNA into and through the RuvAB complex. RuvB forms 2 homohexamers on either side of HJ DNA bound by 1 or 2 RuvA tetramers; 4 subunits per hexamer contact DNA at a time. Coordinated motions by a converter formed by DNA-disengaged RuvB subunits stimulates ATP hydrolysis and nucleotide exchange. Immobilization of the converter enables RuvB to convert the ATP-contained energy into a lever motion, pulling 2 nucleotides of DNA out of the RuvA tetramer per ATP hydrolyzed, thus driving DNA branch migration. The RuvB motors rotate together with the DNA substrate, which together with the progressing nucleotide cycle form the mechanistic basis for DNA recombination by continuous HJ branch migration. Branch migration allows RuvC to scan DNA until it finds its consensus sequence, where it cleaves and resolves cruciform DNA. The polypeptide is Holliday junction branch migration complex subunit RuvB (Prochlorococcus marinus (strain NATL2A)).